Here is a 439-residue protein sequence, read N- to C-terminus: Probable cysteine protease atg4 (439 aa).

The interval A48–T92 is disordered. Residues S64–D75 show a composition bias toward polar residues. The segment covering S76–S87 has biased composition (low complexity). C158 serves as the catalytic Nucleophile. Active-site residues include D332 and H334.

This sequence belongs to the peptidase C54 family.

Its subcellular location is the cytoplasm. It is found in the nucleus. It localises to the preautophagosomal structure. The enzyme catalyses [protein]-C-terminal L-amino acid-glycyl-phosphatidylethanolamide + H2O = [protein]-C-terminal L-amino acid-glycine + a 1,2-diacyl-sn-glycero-3-phosphoethanolamine. Functionally, cysteine protease that plays a key role in cytoplasm to vacuole transport (Cvt) and autophagy by mediating both proteolytic activation and delipidation of ATG8. Required for selective autophagic degradation of the nucleus (nucleophagy) as well as for mitophagy which contributes to regulate mitochondrial quantity and quality by eliminating the mitochondria to a basal level to fulfill cellular energy requirements and preventing excess ROS production. The protease activity is required for proteolytic activation of ATG8: cleaves the C-terminal amino acid of ATG8 to reveal a C-terminal glycine. ATG8 ubiquitin-like activity requires the exposure of the glycine at the C-terminus for its conjugation to phosphatidylethanolamine (PE) and its insertion to membranes, which is necessary for autophagy. The ATG8-PE conjugate mediates tethering between adjacent membranes and stimulates membrane hemifusion, leading to expansion of the autophagosomal membrane during autophagy. In addition to the protease activity, also catalyzes deconjugation of PE-conjugated forms of ATG8 during macroautophagy: ATG8 delipidation is required to release the protein from membranes, which facilitates multiple events during macroautophagy, and especially for efficient autophagosome biogenesis, the assembly of ATG9-containing tubulovesicular clusters into phagophores/autophagosomes, and for the disassembly of PAS-associated ATG components. ATG8 delipidation by ATG4 also recycles ATG8-PE generated on inappropriate membranes to maintain a reservoir of unlipidated ATG8 that is required for autophagosome formation at the PAS. This Botryotinia fuckeliana (strain B05.10) (Noble rot fungus) protein is Probable cysteine protease atg4 (atg4).